The following is a 137-amino-acid chain: Small ribosomal subunit protein uS9 (137 aa).

It belongs to the universal ribosomal protein uS9 family.

This Sulfurisphaera tokodaii (strain DSM 16993 / JCM 10545 / NBRC 100140 / 7) (Sulfolobus tokodaii) protein is Small ribosomal subunit protein uS9 (rps9).